The primary structure comprises 254 residues: 5-oxoprolinase subunit A (254 aa).

Belongs to the LamB/PxpA family. In terms of assembly, forms a complex composed of PxpA, PxpB and PxpC.

The enzyme catalyses 5-oxo-L-proline + ATP + 2 H2O = L-glutamate + ADP + phosphate + H(+). Functionally, catalyzes the cleavage of 5-oxoproline to form L-glutamate coupled to the hydrolysis of ATP to ADP and inorganic phosphate. The protein is 5-oxoprolinase subunit A of Burkholderia lata (strain ATCC 17760 / DSM 23089 / LMG 22485 / NCIMB 9086 / R18194 / 383).